The sequence spans 457 residues: UDP-N-acetylmuramate--L-alanine ligase (457 aa).

117–123 (GTHGKTT) is an ATP binding site.

This sequence belongs to the MurCDEF family.

The protein localises to the cytoplasm. It catalyses the reaction UDP-N-acetyl-alpha-D-muramate + L-alanine + ATP = UDP-N-acetyl-alpha-D-muramoyl-L-alanine + ADP + phosphate + H(+). Its pathway is cell wall biogenesis; peptidoglycan biosynthesis. Its function is as follows. Cell wall formation. This chain is UDP-N-acetylmuramate--L-alanine ligase, found in Clostridium kluyveri (strain NBRC 12016).